The sequence spans 169 residues: Disulfide bond formation protein B (169 aa).

At 1 to 13 (MQALNHFSRIRLS) the chain is on the cytoplasmic side. A helical transmembrane segment spans residues 14-30 (WFLLLLCIIFFEASALT). Over 31–48 (FQHIMKLPPCVMCIYERV) the chain is Periplasmic. The cysteines at positions 40 and 43 are disulfide-linked. The chain crosses the membrane as a helical span at residues 49–64 (AMMGIGGAAIIGLLNP). Over 65-71 (NNLIIRW) the chain is Cytoplasmic. Residues 72 to 89 (CGFIAWGISAGWGLKLAL) traverse the membrane as a helical segment. The Periplasmic portion of the chain corresponds to 90-144 (EHVDFQLNPSPFSTCDLFVTFPSWAPLNKWAPWMFEAYGDCSKIVWQFLTLTMPQ). A disulfide bridge connects residues Cys104 and Cys130. Residues 145-163 (WLVIIFAGNLIALAIFVIA) traverse the membrane as a helical segment. The Cytoplasmic portion of the chain corresponds to 164–169 (QFFNKK).

The protein belongs to the DsbB family.

Its subcellular location is the cell inner membrane. In terms of biological role, required for disulfide bond formation in some periplasmic proteins. Acts by oxidizing the DsbA protein. This is Disulfide bond formation protein B from Aliivibrio fischeri (strain ATCC 700601 / ES114) (Vibrio fischeri).